The chain runs to 284 residues: Bifunctional protein FolD (284 aa).

NADP(+) is bound by residues 165-167 (GAS), Ile190, and Ile231.

Belongs to the tetrahydrofolate dehydrogenase/cyclohydrolase family. As to quaternary structure, homodimer.

The catalysed reaction is (6R)-5,10-methylene-5,6,7,8-tetrahydrofolate + NADP(+) = (6R)-5,10-methenyltetrahydrofolate + NADPH. The enzyme catalyses (6R)-5,10-methenyltetrahydrofolate + H2O = (6R)-10-formyltetrahydrofolate + H(+). The protein operates within one-carbon metabolism; tetrahydrofolate interconversion. In terms of biological role, catalyzes the oxidation of 5,10-methylenetetrahydrofolate to 5,10-methenyltetrahydrofolate and then the hydrolysis of 5,10-methenyltetrahydrofolate to 10-formyltetrahydrofolate. The chain is Bifunctional protein FolD from Alkaliphilus metalliredigens (strain QYMF).